A 472-amino-acid polypeptide reads, in one-letter code: 3-isopropylmalate dehydratase large subunit (472 aa).

[4Fe-4S] cluster is bound by residues cysteine 349, cysteine 409, and cysteine 412.

Belongs to the aconitase/IPM isomerase family. LeuC type 1 subfamily. As to quaternary structure, heterodimer of LeuC and LeuD. It depends on [4Fe-4S] cluster as a cofactor.

The catalysed reaction is (2R,3S)-3-isopropylmalate = (2S)-2-isopropylmalate. It participates in amino-acid biosynthesis; L-leucine biosynthesis; L-leucine from 3-methyl-2-oxobutanoate: step 2/4. In terms of biological role, catalyzes the isomerization between 2-isopropylmalate and 3-isopropylmalate, via the formation of 2-isopropylmaleate. The sequence is that of 3-isopropylmalate dehydratase large subunit from Rhodospirillum rubrum (strain ATCC 11170 / ATH 1.1.1 / DSM 467 / LMG 4362 / NCIMB 8255 / S1).